A 556-amino-acid polypeptide reads, in one-letter code: MNVLEQTEQKLKEQIHHAVIHAELATEDQVPDIILEKPKDKAHGDFATNIAMQLARVAKKAPRQIADDIASKLNKSEASVEKVEIAGPGFINFFMKQDFLGEVIDTVLSAGDNYGKSTGGNGEKVQVEFVSVNPTGDLHLGHARNAAFGDVLCNVFAAAGYEVEREYYINDAGNQINNLGLSVEARYLQEIGQDVDMPEDGYQGQAIIEIAKELVKKDGEKWADKDHEERLDFFKEYGLKASLRNIESDLKDFRVEFDHWFSERSLFKDGQIDDTLAVLDDGGYTFEKDGALWFKTTEFGDDKDRVLIKGDGNYTYLTPDIAYHKNKLDRGFDRIINVWGSDHHGYIPRMRAALQALGYPVEKFDVKIIQMVNLFEAGEKVKMSKRTGKAVSLRELMDEVGIDAVRYYFVARSNDSQLDFDMDLAKSQSNDNPVYYAQYAHARICTMLSQAKSKGFNTEAEFDASLLTAEKELDLLKKIGELPQMIVDAADKHTPHKVTQYIFELATLLHSFYNAEKVLDADNEARTHARIALMKAVRQTLANAMTIIGISAPEKM.

The 'HIGH' region motif lies at V132–H142.

The protein belongs to the class-I aminoacyl-tRNA synthetase family. In terms of assembly, monomer.

The protein localises to the cytoplasm. It catalyses the reaction tRNA(Arg) + L-arginine + ATP = L-arginyl-tRNA(Arg) + AMP + diphosphate. This chain is Arginine--tRNA ligase, found in Oceanobacillus iheyensis (strain DSM 14371 / CIP 107618 / JCM 11309 / KCTC 3954 / HTE831).